The chain runs to 235 residues: uncharacterized protein (235 aa).

To E.coli YbeU.

This is an uncharacterized protein from Escherichia coli (strain K12).